The sequence spans 216 residues: Soluble inorganic pyrophosphatase 3 (216 aa).

The segment covering 1-10 (MSEEAYEETQ) has biased composition (acidic residues). A disordered region spans residues 1–21 (MSEEAYEETQESSQSPRPVPK). Substrate-binding residues include Lys66 and Arg80. Tyr88 acts as the Proton donor in catalysis. Tyr92 contributes to the substrate binding site. Residues Asp102, Asp107, and Asp139 each coordinate Mg(2+). Tyr176 contributes to the substrate binding site.

It belongs to the PPase family. It depends on Mg(2+) as a cofactor. Expressed preferentially in stamen, pollen and flower, and at a low level in lateral roots and root elongation zones.

Its subcellular location is the cytoplasm. The enzyme catalyses diphosphate + H2O = 2 phosphate + H(+). This Arabidopsis thaliana (Mouse-ear cress) protein is Soluble inorganic pyrophosphatase 3.